Reading from the N-terminus, the 217-residue chain is ATP-dependent Clp protease proteolytic subunit (217 aa).

The active-site Nucleophile is S121. The active site involves H146.

It belongs to the peptidase S14 family. As to quaternary structure, fourteen ClpP subunits assemble into 2 heptameric rings which stack back to back to give a disk-like structure with a central cavity, resembling the structure of eukaryotic proteasomes.

The protein resides in the cytoplasm. It carries out the reaction Hydrolysis of proteins to small peptides in the presence of ATP and magnesium. alpha-casein is the usual test substrate. In the absence of ATP, only oligopeptides shorter than five residues are hydrolyzed (such as succinyl-Leu-Tyr-|-NHMec, and Leu-Tyr-Leu-|-Tyr-Trp, in which cleavage of the -Tyr-|-Leu- and -Tyr-|-Trp bonds also occurs).. Functionally, cleaves peptides in various proteins in a process that requires ATP hydrolysis. Has a chymotrypsin-like activity. Plays a major role in the degradation of misfolded proteins. This Burkholderia mallei (strain NCTC 10247) protein is ATP-dependent Clp protease proteolytic subunit.